A 127-amino-acid chain; its full sequence is Small ribosomal subunit protein uS13 (127 aa).

Residues Arg-90–Lys-127 form a disordered region. Over residues Gln-101–Lys-127 the composition is skewed to basic residues.

The protein belongs to the universal ribosomal protein uS13 family. Part of the 30S ribosomal subunit. Forms a loose heterodimer with protein S19. Forms two bridges to the 50S subunit in the 70S ribosome.

Its function is as follows. Located at the top of the head of the 30S subunit, it contacts several helices of the 16S rRNA. In the 70S ribosome it contacts the 23S rRNA (bridge B1a) and protein L5 of the 50S subunit (bridge B1b), connecting the 2 subunits; these bridges are implicated in subunit movement. Contacts the tRNAs in the A and P-sites. The polypeptide is Small ribosomal subunit protein uS13 (Rippkaea orientalis (strain PCC 8801 / RF-1) (Cyanothece sp. (strain PCC 8801))).